Consider the following 221-residue polypeptide: Riboflavin kinase (221 aa).

Residues 1–92 (MVTPEDLECL…YRLFGRQEKS (92 aa)) form an H-T-H motif-like region. The tract at residues 93–221 (LMLNGTVQSG…GDEVTIEVTL (129 aa)) is riboflavin kinase. 102-107 (GLGEGA) serves as a coordination point for CDP. 2 residues coordinate Mg(2+): threonine 131 and asparagine 133. FMN-binding residues include threonine 188 and glutamate 196. Position 201 to 204 (201 to 204 (EGLR)) interacts with CDP.

The protein belongs to the archaeal riboflavin kinase family. Mg(2+) is required as a cofactor.

It carries out the reaction riboflavin + CTP = CDP + FMN + H(+). It functions in the pathway cofactor biosynthesis; FMN biosynthesis; FMN from riboflavin (CTP route): step 1/1. Catalyzes the CTP-dependent phosphorylation of riboflavin (vitamin B2) to form flavin mononucleotide (FMN). The protein is Riboflavin kinase (ribK) of Methanospirillum hungatei JF-1 (strain ATCC 27890 / DSM 864 / NBRC 100397 / JF-1).